A 190-amino-acid chain; its full sequence is Probable thymidylate kinase (190 aa).

9-16 (GIDGAGKT) contacts ATP.

The protein belongs to the thymidylate kinase family.

It catalyses the reaction dTMP + ATP = dTDP + ADP. The sequence is that of Probable thymidylate kinase (tmk1) from Sulfurisphaera tokodaii (strain DSM 16993 / JCM 10545 / NBRC 100140 / 7) (Sulfolobus tokodaii).